The sequence spans 494 residues: 4-trimethylaminobutyraldehyde dehydrogenase (494 aa).

Serine 2 bears the N-acetylserine mark. The residue at position 30 (lysine 30) is an N6-acetyllysine; alternate. Lysine 30 is modified (N6-succinyllysine; alternate). The residue at position 59 (lysine 59) is an N6-succinyllysine. Residues lysine 180 and 232-236 (GSVPT) each bind NAD(+). The active-site Proton acceptor is glutamate 254. Cysteine 288 acts as the Nucleophile in catalysis. Lysine 298 bears the N6-acetyllysine mark. An NAD(+)-binding site is contributed by glutamate 391.

This sequence belongs to the aldehyde dehydrogenase family. Homotetramer. Detected in lever (at protein level).

The protein localises to the cytoplasm. It localises to the cytosol. The catalysed reaction is 4-(trimethylamino)butanal + NAD(+) + H2O = 4-(trimethylamino)butanoate + NADH + 2 H(+). It carries out the reaction an aldehyde + NAD(+) + H2O = a carboxylate + NADH + 2 H(+). The enzyme catalyses 4-aminobutanal + NAD(+) + H2O = 4-aminobutanoate + NADH + 2 H(+). It catalyses the reaction formaldehyde + NAD(+) + H2O = formate + NADH + 2 H(+). The catalysed reaction is acetaldehyde + NAD(+) + H2O = acetate + NADH + 2 H(+). It carries out the reaction imidazole-4-acetaldehyde + NAD(+) + H2O = imidazole-4-acetate + NADH + 2 H(+). The enzyme catalyses acrolein + NAD(+) + H2O = acrylate + NADH + 2 H(+). It catalyses the reaction (5-hydroxyindol-3-yl)acetaldehyde + NAD(+) + H2O = (5-hydroxyindol-3-yl)acetate + NADH + 2 H(+). The catalysed reaction is 3,4-dihydroxyphenylacetaldehyde + NAD(+) + H2O = 3,4-dihydroxyphenylacetate + NADH + 2 H(+). It carries out the reaction spermine monoaldehyde + NAD(+) + H2O = N-(2-carboxyethyl)spermidine + NADH + 2 H(+). The enzyme catalyses propanal + NAD(+) + H2O = propanoate + NADH + 2 H(+). It catalyses the reaction butanal + NAD(+) + H2O = butanoate + NADH + 2 H(+). The catalysed reaction is pentanal + NAD(+) + H2O = pentanoate + NADH + 2 H(+). It carries out the reaction hexanal + NAD(+) + H2O = hexanoate + NADH + 2 H(+). The protein operates within amine and polyamine biosynthesis; carnitine biosynthesis. Functionally, converts gamma-trimethylaminobutyraldehyde into gamma-butyrobetaine with high efficiency (in vitro). Can catalyze the irreversible oxidation of a broad range of aldehydes to the corresponding acids in an NAD-dependent reaction, but with low efficiency. Catalyzes the oxidation of aldehydes arising from biogenic amines and polyamines. The sequence is that of 4-trimethylaminobutyraldehyde dehydrogenase (Aldh9a1) from Rattus norvegicus (Rat).